The primary structure comprises 174 residues: Adipose-secreted signaling protein (174 aa).

The protein belongs to the ADISSP family.

It is found in the secreted. Its function is as follows. May be involved in thermogenesis and glucose homeostasis. In Xenopus tropicalis (Western clawed frog), this protein is Adipose-secreted signaling protein.